The chain runs to 301 residues: Aldose reductase (301 aa).

11–20 (GKEIPTVGLG) contacts NADP(+). The Proton donor role is filled by Y51. H111 lines the substrate pocket. 209 to 266 (SSLGSAPGSSAKVRDDKTIKAIAKKYGCAPSQIILSYITAQGICVIPKSRSKEHLREN) is a binding site for NADP(+).

It belongs to the aldo/keto reductase family.

It is found in the cytoplasm. It carries out the reaction an alditol + NAD(+) = an aldose + NADH + H(+). The enzyme catalyses an alditol + NADP(+) = an aldose + NADPH + H(+). Its function is as follows. Catalyzes the NADPH-dependent reduction of a wide variety of carbonyl-containing compounds to their corresponding alcohols with a broad range of catalytic efficiencies. This chain is Aldose reductase, found in Encephalitozoon cuniculi (strain GB-M1) (Microsporidian parasite).